Here is an 870-residue protein sequence, read N- to C-terminus: Leucine--tRNA ligase (870 aa).

The short motif at 36–46 (PYPSGKIHLGH) is the 'HIGH' region element. A 'KMSKS' region motif is present at residues 602–606 (KMSKS). An ATP-binding site is contributed by Lys-605.

The protein belongs to the class-I aminoacyl-tRNA synthetase family.

The protein resides in the cytoplasm. It carries out the reaction tRNA(Leu) + L-leucine + ATP = L-leucyl-tRNA(Leu) + AMP + diphosphate. This Rickettsia akari (strain Hartford) protein is Leucine--tRNA ligase.